Reading from the N-terminus, the 357-residue chain is RNA-binding protein 4B (357 aa).

RRM domains follow at residues 2–72 (VKLF…ASKN) and 78–148 (TKLH…LSTS). A CCHC-type zinc finger spans residues 160-177 (SGCYRCGKEGHWSKECPV). The tract at residues 196–357 (AVRTPYTMGY…YVDRTRYSAF (162 aa)) is interaction with TNPO3.

In terms of assembly, interacts with TNPO3, which may mediate nuclear import of the protein. As to expression, expressed in the suprachiasmatic nucleus (SCN) (at protein level). Expressed in the suprachiasmatic nucleus (SCN).

It is found in the nucleus. The protein localises to the nucleolus. In terms of biological role, required for the translational activation of PER1 mRNA in response to circadian clock. Binds directly to the 3'-UTR of the PER1 mRNA. This Mus musculus (Mouse) protein is RNA-binding protein 4B (Rbm4b).